The sequence spans 682 residues: Potassium-transporting ATPase ATP-binding subunit (682 aa).

4 helical membrane passes run 34-54 (PVMFIVWIGSLLTTFISIAMA), 62-82 (ALFSAAISAWLWVTVLFANFA), 219-239 (IALTILLIALTIVFLLATATL), and 254-274 (VLVALLVCLIPTTIGGLLSAI). The active-site 4-aspartylphosphate intermediate is the aspartate 307. Residues aspartate 344, glutamate 348, 377–384 (FTAQSRMS), and lysine 395 each bind ATP. Mg(2+)-binding residues include aspartate 518 and aspartate 522. The next 3 helical transmembrane spans lie at 588–608 (FAIIPAAFAATYPQLNALNIM), 616–636 (AILSAVIFNALIIVFLIPLAL), and 656–676 (IYGLGGLLVPFIGIKVIDLLL).

It belongs to the cation transport ATPase (P-type) (TC 3.A.3) family. Type IA subfamily. In terms of assembly, the system is composed of three essential subunits: KdpA, KdpB and KdpC.

The protein resides in the cell inner membrane. It carries out the reaction K(+)(out) + ATP + H2O = K(+)(in) + ADP + phosphate + H(+). Part of the high-affinity ATP-driven potassium transport (or Kdp) system, which catalyzes the hydrolysis of ATP coupled with the electrogenic transport of potassium into the cytoplasm. This subunit is responsible for energy coupling to the transport system and for the release of the potassium ions to the cytoplasm. In Escherichia coli (strain SMS-3-5 / SECEC), this protein is Potassium-transporting ATPase ATP-binding subunit.